Consider the following 340-residue polypeptide: Ketol-acid reductoisomerase (NADP(+)) (340 aa).

Positions 1–183 (MAITVYYDKD…GGGRTGIIET (183 aa)) constitute a KARI N-terminal Rossmann domain. Residues 26-29 (FGSQ), Arg-49, Ser-52, Ser-54, and 84-87 (DEIQ) each bind NADP(+). His-109 is a catalytic residue. NADP(+) is bound at residue Gly-135. The 146-residue stretch at 184–329 (TFKAETETDL…RNLRAMMPWI (146 aa)) folds into the KARI C-terminal knotted domain. Residues Asp-192, Glu-196, Glu-228, and Glu-232 each contribute to the Mg(2+) site. Ser-253 contributes to the substrate binding site.

It belongs to the ketol-acid reductoisomerase family. The cofactor is Mg(2+).

It catalyses the reaction (2R)-2,3-dihydroxy-3-methylbutanoate + NADP(+) = (2S)-2-acetolactate + NADPH + H(+). It carries out the reaction (2R,3R)-2,3-dihydroxy-3-methylpentanoate + NADP(+) = (S)-2-ethyl-2-hydroxy-3-oxobutanoate + NADPH + H(+). Its pathway is amino-acid biosynthesis; L-isoleucine biosynthesis; L-isoleucine from 2-oxobutanoate: step 2/4. It functions in the pathway amino-acid biosynthesis; L-valine biosynthesis; L-valine from pyruvate: step 2/4. In terms of biological role, involved in the biosynthesis of branched-chain amino acids (BCAA). Catalyzes an alkyl-migration followed by a ketol-acid reduction of (S)-2-acetolactate (S2AL) to yield (R)-2,3-dihydroxy-isovalerate. In the isomerase reaction, S2AL is rearranged via a Mg-dependent methyl migration to produce 3-hydroxy-3-methyl-2-ketobutyrate (HMKB). In the reductase reaction, this 2-ketoacid undergoes a metal-dependent reduction by NADPH to yield (R)-2,3-dihydroxy-isovalerate. This chain is Ketol-acid reductoisomerase (NADP(+)), found in Campylobacter jejuni subsp. doylei (strain ATCC BAA-1458 / RM4099 / 269.97).